The following is a 145-amino-acid chain: uncharacterized protein (145 aa).

Its subcellular location is the mitochondrion. This is an uncharacterized protein from Arabidopsis thaliana (Mouse-ear cress).